We begin with the raw amino-acid sequence, 161 residues long: Nucleotide-binding protein Aave_1854 (161 aa).

It belongs to the YajQ family.

In terms of biological role, nucleotide-binding protein. In Paracidovorax citrulli (strain AAC00-1) (Acidovorax citrulli), this protein is Nucleotide-binding protein Aave_1854.